Reading from the N-terminus, the 218-residue chain is Protein GrpE (218 aa).

Basic and acidic residues predominate over residues 1 to 21; the sequence is MSDKQREAERQQSEDKAHSEA. The tract at residues 1–66 is disordered; it reads MSDKQREAER…LEEARARAEE (66 aa). Positions 24 to 36 are enriched in low complexity; sequence AEAGQAPEAQAAE.

It belongs to the GrpE family. Homodimer.

It localises to the cytoplasm. Its function is as follows. Participates actively in the response to hyperosmotic and heat shock by preventing the aggregation of stress-denatured proteins, in association with DnaK and GrpE. It is the nucleotide exchange factor for DnaK and may function as a thermosensor. Unfolded proteins bind initially to DnaJ; upon interaction with the DnaJ-bound protein, DnaK hydrolyzes its bound ATP, resulting in the formation of a stable complex. GrpE releases ADP from DnaK; ATP binding to DnaK triggers the release of the substrate protein, thus completing the reaction cycle. Several rounds of ATP-dependent interactions between DnaJ, DnaK and GrpE are required for fully efficient folding. The protein is Protein GrpE of Alkalilimnicola ehrlichii (strain ATCC BAA-1101 / DSM 17681 / MLHE-1).